The sequence spans 441 residues: Ribulose bisphosphate carboxylase large chain (441 aa).

Position 5 is an N6,N6,N6-trimethyllysine (Lys5). Substrate is bound by residues Asn114 and Thr164. The active-site Proton acceptor is the Lys166. Residue Lys168 coordinates substrate. Mg(2+)-binding residues include Lys192, Asp194, and Glu195. Lys192 bears the N6-carboxylysine mark. The active-site Proton acceptor is His285. The substrate site is built by Arg286, His318, and Ser370.

It belongs to the RuBisCO large chain family. Type I subfamily. In terms of assembly, heterohexadecamer of 8 large chains and 8 small chains; disulfide-linked. The disulfide link is formed within the large subunit homodimers. Requires Mg(2+) as cofactor. The disulfide bond which can form in the large chain dimeric partners within the hexadecamer appears to be associated with oxidative stress and protein turnover.

It localises to the plastid. The protein resides in the chloroplast. The enzyme catalyses 2 (2R)-3-phosphoglycerate + 2 H(+) = D-ribulose 1,5-bisphosphate + CO2 + H2O. It catalyses the reaction D-ribulose 1,5-bisphosphate + O2 = 2-phosphoglycolate + (2R)-3-phosphoglycerate + 2 H(+). Its function is as follows. RuBisCO catalyzes two reactions: the carboxylation of D-ribulose 1,5-bisphosphate, the primary event in carbon dioxide fixation, as well as the oxidative fragmentation of the pentose substrate in the photorespiration process. Both reactions occur simultaneously and in competition at the same active site. This Pellaea rotundifolia (Button fern) protein is Ribulose bisphosphate carboxylase large chain.